A 75-amino-acid polypeptide reads, in one-letter code: MKQDIHPKYTEVTVNCANCGNTFVTRSTRDSIKVDICSNCHPFYTGKQTLVDTAGRVDRFNKRFAKSAASQAQAK.

It belongs to the bacterial ribosomal protein bL31 family. Type A subfamily. Part of the 50S ribosomal subunit.

In terms of biological role, binds the 23S rRNA. The polypeptide is Large ribosomal subunit protein bL31 (Chlorobium phaeovibrioides (strain DSM 265 / 1930) (Prosthecochloris vibrioformis (strain DSM 265))).